The sequence spans 354 residues: MTELKNDRYLRALLRQPVDVTPVWMMRRAGRYLPEYKATRAQAGDFMSLCKNAELACEVTLQPLRRYPLDAAILFSDILTIPDAMGLGLYFEAGEGPRFTAPVTCKADVEKLPIPDPEGELGYVMNAVRTIRRELKGEVPLIGFSGSPWTLATYMVEGGSSKAFTVIKKMMYADPQALHLLLDKLAKSVTLYLNAQIKAGAQSVMIFDTWGGVLTGRDYQQFSLYYMHKIVDGLLRENDGRRVPVTLFTKGGGQWLEAMAETGCDALGLDWTTDIADARRRVGHKVALQGNMDPSMLYAPPARIEDEVATILAGFGQGEGHVFNLGHGIHQDVPPEHAGAFVEAVHRLSAQYHN.

Substrate-binding positions include 27–31 (RRAGR), Phe-46, Asp-77, Tyr-154, Thr-209, and His-327.

It belongs to the uroporphyrinogen decarboxylase family. In terms of assembly, homodimer.

It localises to the cytoplasm. The enzyme catalyses uroporphyrinogen III + 4 H(+) = coproporphyrinogen III + 4 CO2. Its pathway is porphyrin-containing compound metabolism; protoporphyrin-IX biosynthesis; coproporphyrinogen-III from 5-aminolevulinate: step 4/4. In terms of biological role, catalyzes the decarboxylation of four acetate groups of uroporphyrinogen-III to yield coproporphyrinogen-III. The polypeptide is Uroporphyrinogen decarboxylase (Salmonella typhimurium (strain LT2 / SGSC1412 / ATCC 700720)).